We begin with the raw amino-acid sequence, 483 residues long: MHQLTLAEIARGLADKSFSSEELTGALLARIKQLDPQINSFISITDDLALAQARAADARRAAGETGVLLGAPIAHKDLFCTNGVRTSCGSKMLDNFKAPYDATVVAKLAEAGMVTLGKTNMDEFAMGSANESSHYGAVKNPWNLEHVPGGSSGGSAAAVAARLLPATTGTDTGGSIRQPAALTNLTGLKPTYGRVSRWGMIAYASSLDQGGPLARTAEDCALLLQGMAGFDAKDSTSIEEPVPDYSASLNASLQGLRIGLPKEYFGAGLDPRIADLVQASVKELEKLGAVVKEISLPNMQHAIPAYYVIAPAEASSNLSRFDGVRFGYRCEEPKDLTDLYKRSRGEGFGVEVQRRIMVGTYALSAGYYDAYYVKAQQIRRLIKNDFMAAFNDVDLILGPTTPNPAWKLGAKSSDPVAAYLEDVYTITANLAGLPGLSMPAGFVDGLPVGVQLLAPYFQEGRLLNVAHRYQQVTDWHTRAPNGF.

Catalysis depends on charge relay system residues K76 and S151. The active-site Acyl-ester intermediate is the S175.

The protein belongs to the amidase family. GatA subfamily. In terms of assembly, heterotrimer of A, B and C subunits.

The enzyme catalyses L-glutamyl-tRNA(Gln) + L-glutamine + ATP + H2O = L-glutaminyl-tRNA(Gln) + L-glutamate + ADP + phosphate + H(+). Its function is as follows. Allows the formation of correctly charged Gln-tRNA(Gln) through the transamidation of misacylated Glu-tRNA(Gln) in organisms which lack glutaminyl-tRNA synthetase. The reaction takes place in the presence of glutamine and ATP through an activated gamma-phospho-Glu-tRNA(Gln). This chain is Glutamyl-tRNA(Gln) amidotransferase subunit A, found in Pseudomonas putida (strain ATCC 700007 / DSM 6899 / JCM 31910 / BCRC 17059 / LMG 24140 / F1).